The chain runs to 285 residues: Bifunctional protein FolD (285 aa).

NADP(+)-binding positions include 166–168 (GAS), S191, and I232.

This sequence belongs to the tetrahydrofolate dehydrogenase/cyclohydrolase family. Homodimer.

It carries out the reaction (6R)-5,10-methylene-5,6,7,8-tetrahydrofolate + NADP(+) = (6R)-5,10-methenyltetrahydrofolate + NADPH. The catalysed reaction is (6R)-5,10-methenyltetrahydrofolate + H2O = (6R)-10-formyltetrahydrofolate + H(+). Its pathway is one-carbon metabolism; tetrahydrofolate interconversion. Its function is as follows. Catalyzes the oxidation of 5,10-methylenetetrahydrofolate to 5,10-methenyltetrahydrofolate and then the hydrolysis of 5,10-methenyltetrahydrofolate to 10-formyltetrahydrofolate. The chain is Bifunctional protein FolD from Edwardsiella ictaluri (strain 93-146).